The primary structure comprises 178 residues: uncharacterized protein (178 aa).

This is an uncharacterized protein from Saccharomyces cerevisiae (strain ATCC 204508 / S288c) (Baker's yeast).